Consider the following 403-residue polypeptide: Probable protein phosphatase 2C 8 (403 aa).

Residues 42 to 80 form a disordered region; sequence LGRTASAVAEDDAAKRVRPASDSSSDSSESAKVAPEPTA. Over residues 62-71 the composition is skewed to low complexity; it reads SDSSSDSSES. Residues 90 to 388 form the PPM-type phosphatase domain; it reads SHGAVSVIGR…DNISVVVVEL (299 aa). Asp-144, Gly-145, Asp-325, and Asp-379 together coordinate Mn(2+).

The protein belongs to the PP2C family. Mg(2+) serves as cofactor. Mn(2+) is required as a cofactor.

The enzyme catalyses O-phospho-L-seryl-[protein] + H2O = L-seryl-[protein] + phosphate. The catalysed reaction is O-phospho-L-threonyl-[protein] + H2O = L-threonyl-[protein] + phosphate. This is Probable protein phosphatase 2C 8 from Oryza sativa subsp. japonica (Rice).